The primary structure comprises 284 residues: ATP phosphoribosyltransferase (284 aa).

The protein belongs to the ATP phosphoribosyltransferase family. Long subfamily. Mg(2+) is required as a cofactor.

It is found in the cytoplasm. The catalysed reaction is 1-(5-phospho-beta-D-ribosyl)-ATP + diphosphate = 5-phospho-alpha-D-ribose 1-diphosphate + ATP. It participates in amino-acid biosynthesis; L-histidine biosynthesis; L-histidine from 5-phospho-alpha-D-ribose 1-diphosphate: step 1/9. Its activity is regulated as follows. Feedback inhibited by histidine. Its function is as follows. Catalyzes the condensation of ATP and 5-phosphoribose 1-diphosphate to form N'-(5'-phosphoribosyl)-ATP (PR-ATP). Has a crucial role in the pathway because the rate of histidine biosynthesis seems to be controlled primarily by regulation of HisG enzymatic activity. The sequence is that of ATP phosphoribosyltransferase from Pseudarthrobacter chlorophenolicus (strain ATCC 700700 / DSM 12829 / CIP 107037 / JCM 12360 / KCTC 9906 / NCIMB 13794 / A6) (Arthrobacter chlorophenolicus).